The sequence spans 446 residues: Chromosomal replication initiator protein DnaA (446 aa).

Residues 1 to 72 (MKNISDLWNQ…ADTIYDLTGE (72 aa)) are domain I, interacts with DnaA modulators. The interval 72 to 109 (EELSIKFVIPQNQNEEDFMPKSPIKKMSKEEPADFPQN) is domain II. Residues 110–326 (MLNPKYTFDT…GALIRVVAYS (217 aa)) are domain III, AAA+ region. ATP is bound by residues G154, G156, K157, and T158. Positions 327–446 (SLINKDINAD…QIKEIKEQLR (120 aa)) are domain IV, binds dsDNA.

Belongs to the DnaA family. In terms of assembly, oligomerizes as a right-handed, spiral filament on DNA at oriC.

It is found in the cytoplasm. Plays an essential role in the initiation and regulation of chromosomal replication. ATP-DnaA binds to the origin of replication (oriC) to initiate formation of the DNA replication initiation complex once per cell cycle. Binds the DnaA box (a 9 base pair repeat at the origin) and separates the double-stranded (ds)DNA. Forms a right-handed helical filament on oriC DNA; dsDNA binds to the exterior of the filament while single-stranded (ss)DNA is stabiized in the filament's interior. The ATP-DnaA-oriC complex binds and stabilizes one strand of the AT-rich DNA unwinding element (DUE), permitting loading of DNA polymerase. After initiation quickly degrades to an ADP-DnaA complex that is not apt for DNA replication. Binds acidic phospholipids. This Bacillus licheniformis (strain ATCC 14580 / DSM 13 / JCM 2505 / CCUG 7422 / NBRC 12200 / NCIMB 9375 / NCTC 10341 / NRRL NRS-1264 / Gibson 46) protein is Chromosomal replication initiator protein DnaA.